Reading from the N-terminus, the 312-residue chain is MARLSEPSPYVEFDRTQWRALRMSTPLKLTEDELKKLRGLGEKLDLLEVEEVYLPLARLIHLQVAARQRLFAATSEFLGEPQQNPDRPVPFIIGVAGSVAVGKSTTARVLQALLARWGNHARVDLVTTDGFLYPNAELGRRNIMHRKGFPESYDRRALMRFVTAVKSGADYACAPVYSHLLYDIVPGEKQVIRHPDILILEGLNVLQTGPALMVSDLFDFSVYVDARLEDIEGWYISRFLTMRSTAFADPASHFHHYATLTDEQAVFAARDIWHSINRPNLIENILPTRPRATLVLRKDADHAINRLRLRKL.

Residue 97–104 (GSVAVGKS) participates in ATP binding.

Belongs to the prokaryotic pantothenate kinase family.

The protein localises to the cytoplasm. The enzyme catalyses (R)-pantothenate + ATP = (R)-4'-phosphopantothenate + ADP + H(+). It functions in the pathway cofactor biosynthesis; coenzyme A biosynthesis; CoA from (R)-pantothenate: step 1/5. The sequence is that of Pantothenate kinase from Mycobacterium sp. (strain JLS).